Here is a 141-residue protein sequence, read N- to C-terminus: MVDMDRISISLPTNLLAEFDEIIEERGYASRSEAIRDSIRDYLIKHKWIHSLEGDRAGTISIIYDHHSTDVMEKLTNIQHDYEKLIVATIHMHLDHDHCMEVVLVKGDASDIKELTDKLTSQKGVKQVKLTVMVPGGNIPQ.

Ni(2+)-binding residues include H80, H91, H93, and C99.

Belongs to the transcriptional regulatory CopG/NikR family. The cofactor is Ni(2+).

In terms of biological role, transcriptional regulator. The polypeptide is Putative nickel-responsive regulator (Methanococcus maripaludis (strain C6 / ATCC BAA-1332)).